The primary structure comprises 469 residues: Probable Xaa-Pro aminopeptidase PEPP (469 aa).

Asp264, Asp275, Glu398, and Glu438 together coordinate Mn(2+).

The protein belongs to the peptidase M24B family. It depends on Mn(2+) as a cofactor.

It catalyses the reaction Release of any N-terminal amino acid, including proline, that is linked to proline, even from a dipeptide or tripeptide.. Functionally, catalyzes the removal of a penultimate prolyl residue from the N-termini of peptides. The sequence is that of Probable Xaa-Pro aminopeptidase PEPP (PEPP) from Ajellomyces capsulatus (strain G186AR / H82 / ATCC MYA-2454 / RMSCC 2432) (Darling's disease fungus).